Consider the following 117-residue polypeptide: NADH-ubiquinone oxidoreductase chain 3 (117 aa).

Helical transmembrane passes span 3 to 23 (LLLT…IVSF), 56 to 76 (FFLV…LLPL), and 85 to 105 (PMFT…GLIY).

This sequence belongs to the complex I subunit 3 family.

It localises to the mitochondrion membrane. It catalyses the reaction a ubiquinone + NADH + 5 H(+)(in) = a ubiquinol + NAD(+) + 4 H(+)(out). In terms of biological role, core subunit of the mitochondrial membrane respiratory chain NADH dehydrogenase (Complex I) that is believed to belong to the minimal assembly required for catalysis. Complex I functions in the transfer of electrons from NADH to the respiratory chain. The immediate electron acceptor for the enzyme is believed to be ubiquinone. This is NADH-ubiquinone oxidoreductase chain 3 (MT-ND3) from Tetraodon nigroviridis (Spotted green pufferfish).